Reading from the N-terminus, the 646-residue chain is Galactofuranosyltransferase GlfT2 (646 aa).

Arginine 182, glutamine 211, asparagine 240, and aspartate 267 together coordinate UDP-alpha-D-galactofuranose. The Mn(2+) site is built by aspartate 267 and aspartate 269. The active-site Proton acceptor is the aspartate 384. Histidine 408 is a binding site for Mn(2+).

It belongs to the glycosyltransferase 2 family. In terms of assembly, homotetramer. The cofactor is Mn(2+). It depends on Mg(2+) as a cofactor.

It localises to the cell membrane. The enzyme catalyses beta-D-galactofuranosyl-(1-&gt;5)-beta-D-galactofuranosyl-(1-&gt;4)-alpha-L-rhamnosyl-(1-&gt;3)-N-acetyl-alpha-D-glucosaminyl-diphospho-trans,octa-cis-decaprenol + 28 UDP-alpha-D-galactofuranose = [beta-D-galactofuranosyl-(1-&gt;5)-beta-D-galactofuranosyl-(1-&gt;6)]14-beta-D-galactofuranosyl-(1-&gt;5)-beta-D-galactofuranosyl-(1-&gt;4)-alpha-L-rhamnopyranosyl-(1-&gt;3)-N-acetyl-alpha-D-glucosaminyl-diphospho-trans,octa-cis-decaprenol + 28 UDP + 28 H(+). It functions in the pathway cell wall biogenesis; cell wall polysaccharide biosynthesis. Functionally, involved in the galactan polymerization of the arabinogalactan (AG) region of the mycolylarabinogalactan-peptidoglycan (mAGP) complex, an essential component of the mycobacteria cell wall. Thus, successively transfers approximately 28 galactofuranosyl (Galf) residues from UDP-galactofuranose (UDP-Galf) onto the galactofuranosyl-galactofuranosyl-rhamnosyl-GlcNAc-diphospho-decaprenol (Galf-Galf-Rha-GlcNAc-PP-C50) acceptor produced by GlfT1, with alternating 1-&gt;5 and 1-&gt;6 links, forming a galactan domain with approximately 30 galactofuranosyl residues. In Mycolicibacterium smegmatis (strain ATCC 700084 / mc(2)155) (Mycobacterium smegmatis), this protein is Galactofuranosyltransferase GlfT2.